Here is a 1381-residue protein sequence, read N- to C-terminus: MYRAGEPGKRQPGPAPPRVRSVEVARGRAGYGFTLSGQAPCVLSCVMRGSPADFVGLRAGDQILAINEINVKKASHEDVVKLIGKCSGVLHMVIAEGTSHVESCSSDEEGGLYEGKGWLRPKLDSKALGINRAERVVEEVQSGGIFNMIFESSSLCASGPEPLKLKQRSLSESAALRLDAGQAGLCAPHPSMLSKEDISKVINDDSVFTVGLDSHDDFGLDASILNVAMVVGYLGSIELPSTSSNLEHDSLQAIRGCMRRLRAEQKIHSLVTMKVMHDCVQLVTDRAGVVAEYPAEKLAFSAVCPDDRRFFGLVTMQTNDDGGLAQEDEGALRTSCHVFMVDPDLFHHKIHQGIARRFGFACTADPDTSGCLEFPASSLPVLQFISVLYRDMGELIEGVRARAFLDGDADAHQNNSTSSNSDSGIGNFNQEEKSNRVLVVDLGGGSSRHGQGSSPGWESGGGRGSQPWSAPWNGAFCHDSEAGSPLETSPNTDRFWDLTKHSGPVSHMEVPPATLRSSIPPSKRGAAGSSCGFNQRWLPVHVLQEWQCGHASDQESYTDSTDGWSSVNCGTLPPPMSKIPADRYRVEGSFAQAPLSTQKRDWSRKAFGMQNLFGPHRNVRKTKEDKKSSKLGRGVALAQTSQRTSARRSFGRSRRFSITRSLDDLESATVSDGELTGADLKDCISNNSLSSNASLPSVQSCRRLRERRVASWAVSFERLLQDPVGVRYFSDFLRKEFSEENILFWQACECFSHVPAHDKKELSYRAREIFSKFLCSKATTPVNIDSQAQLADDILNAPHPDMFKEQQLQIFNLMKFDSYTRFLKSQLYQECVLAEVEGRTLPDSQQVPSSPASKHSISSDHSNVSTPKKLSGKSKSGRSLNEDVGEEDSEKKRRGAFFSWSRSRSTGRSQKKKDHGDHAHDAPHANGGLCRRESQGSVSSAGSLDLSEACRTSALEKDKAAKHCCVHLPDGTSCVVAVKSGFSIKEILSGLCERHGINGAAVDLFLVGGDKPLVLHQDSSILATRDLRLEKRTLFRLDLVPINRSVGLKAKPTKPVTEVLRPVVAKYGLDLGSLLVRLSGEKEPLDLGAPISSLDGQRVILEERDPSRGKVSTDKQKGAPVKQNSAVNSSPRNHLAMGEERTLGKSNSIKIRGENGKSARDPRLSKREESIAKIGKKKYQKINLDEAEEFFELISKAQSNRADDQRGLLRKEDLVLPEFLRLPAGSSELALSSPPPVKGYSKRAVTGHGQEGAAQTEESYSDSPATSPASAQSPCSAYSPGSAHSPGSAHSTPGPPGTTQPGEKPTKPSCVSMVQEGTTQAWRRLSPEMEAGGIQTVEDEQVADLTLMGEGDISSPNSTLLPPPPTPQDTPGPPRPGTSRF.

Residues 21–98 (SVEVARGRAG…VLHMVIAEGT (78 aa)) form the PDZ domain. 2 positions are modified to phosphoserine: Ser-171 and Ser-194. Lys-195 is covalently cross-linked (Glycyl lysine isopeptide (Lys-Gly) (interchain with G-Cter in SUMO2)). Residues 223-390 (SILNVAMVVG…VLQFISVLYR (168 aa)) enclose the PID domain. Disordered regions lie at residues 409–428 (ADAH…IGNF), 442–528 (LGGG…GAAG), and 620–644 (RKTK…SQRT). Polar residues predominate over residues 412–428 (HQNNSTSSNSDSGIGNF). Omega-N-methylarginine occurs at positions 524 and 633. A phosphoserine mark is found at Ser-661 and Ser-671. The RGS domain occupies 715 to 832 (SFERLLQDPV…LKSQLYQECV (118 aa)). Positions 842–942 (PDSQQVPSSP…ESQGSVSSAG (101 aa)) are disordered. Residues 849 to 869 (SSPASKHSISSDHSNVSTPKK) show a composition bias toward low complexity. A phosphoserine mark is found at Ser-850 and Ser-879. The segment covering 914–923 (DHGDHAHDAP) has biased composition (basic and acidic residues). Ser-943 bears the Phosphoserine mark. 2 RBD domains span residues 962 to 1032 (KHCC…LEKR) and 1034 to 1104 (LFRL…LEER). Residues 1102–1117 (EERDPSRGKVSTDKQK) are compositionally biased toward basic and acidic residues. The interval 1102-1169 (EERDPSRGKV…RDPRLSKREE (68 aa)) is disordered. The span at 1122-1132 (KQNSAVNSSPR) shows a compositional bias: polar residues. Positions 1151-1169 (IRGENGKSARDPRLSKREE) are enriched in basic and acidic residues. One can recognise a GoLoco domain in the interval 1187–1209 (AEEFFELISKAQSNRADDQRGLL). Disordered stretches follow at residues 1227–1318 (SELA…QEGT) and 1347–1381 (LMGE…TSRF). Low complexity predominate over residues 1261–1280 (SDSPATSPASAQSPCSAYSP). Over residues 1361–1381 (LPPPPTPQDTPGPPRPGTSRF) the composition is skewed to pro residues.

As to quaternary structure, interacts with GNAI1, GNAI2 and GNAI3; the interactions are GDP-dependent. Expressed in brain.

Its subcellular location is the nucleus. The protein localises to the cytoplasm. The protein resides in the cell projection. It localises to the dendrite. It is found in the synapse. Its function is as follows. Regulates G protein-coupled receptor signaling cascades. Inhibits signal transduction by increasing the GTPase activity of G protein alpha subunits, thereby driving them into their inactive GDP-bound form. This is Regulator of G-protein signaling 12 (Rgs12) from Mus musculus (Mouse).